Reading from the N-terminus, the 138-residue chain is Small ribosomal subunit protein uS11c (138 aa).

Belongs to the universal ribosomal protein uS11 family. As to quaternary structure, part of the 30S ribosomal subunit.

It is found in the plastid. The protein resides in the chloroplast. In Morus indica (Mulberry), this protein is Small ribosomal subunit protein uS11c.